We begin with the raw amino-acid sequence, 520 residues long: Peptide chain release factor 3 (520 aa).

One can recognise a tr-type G domain in the interval 8-277; sequence ESRKTFAIIS…FAPMPNARQT (270 aa). GTP contacts are provided by residues 17–24, 85–89, and 139–142; these read SHPDAGKT, DTPGH, and NKLD.

It belongs to the TRAFAC class translation factor GTPase superfamily. Classic translation factor GTPase family. PrfC subfamily.

The protein localises to the cytoplasm. Increases the formation of ribosomal termination complexes and stimulates activities of RF-1 and RF-2. It binds guanine nucleotides and has strong preference for UGA stop codons. It may interact directly with the ribosome. The stimulation of RF-1 and RF-2 is significantly reduced by GTP and GDP, but not by GMP. The protein is Peptide chain release factor 3 of Staphylococcus aureus (strain USA300 / TCH1516).